We begin with the raw amino-acid sequence, 396 residues long: Phosphopentomutase (396 aa).

Mn(2+)-binding residues include Asp-13, Asp-288, His-293, Asp-329, His-330, and His-341.

Belongs to the phosphopentomutase family. The cofactor is Mn(2+).

Its subcellular location is the cytoplasm. It carries out the reaction 2-deoxy-alpha-D-ribose 1-phosphate = 2-deoxy-D-ribose 5-phosphate. The enzyme catalyses alpha-D-ribose 1-phosphate = D-ribose 5-phosphate. The protein operates within carbohydrate degradation; 2-deoxy-D-ribose 1-phosphate degradation; D-glyceraldehyde 3-phosphate and acetaldehyde from 2-deoxy-alpha-D-ribose 1-phosphate: step 1/2. In terms of biological role, isomerase that catalyzes the conversion of deoxy-ribose 1-phosphate (dRib-1-P) and ribose 1-phosphate (Rib-1-P) to deoxy-ribose 5-phosphate (dRib-5-P) and ribose 5-phosphate (Rib-5-P), respectively. This chain is Phosphopentomutase, found in Clostridium perfringens (strain ATCC 13124 / DSM 756 / JCM 1290 / NCIMB 6125 / NCTC 8237 / Type A).